Consider the following 119-residue polypeptide: Basic phospholipase A2 notexin (119 aa).

7 cysteine pairs are disulfide-bonded: cysteine 11-cysteine 71, cysteine 27-cysteine 118, cysteine 29-cysteine 45, cysteine 44-cysteine 99, cysteine 51-cysteine 92, cysteine 60-cysteine 85, and cysteine 78-cysteine 90. 3 residues coordinate Ca(2+): tyrosine 28, glycine 30, and glycine 32. Histidine 48 is a catalytic residue. Ca(2+) is bound at residue aspartate 49. The active site involves aspartate 93.

This sequence belongs to the phospholipase A2 family. Group I subfamily. D49 sub-subfamily. Monomer. It depends on Ca(2+) as a cofactor. In terms of tissue distribution, expressed by the venom gland.

It localises to the secreted. It carries out the reaction a 1,2-diacyl-sn-glycero-3-phosphocholine + H2O = a 1-acyl-sn-glycero-3-phosphocholine + a fatty acid + H(+). Functionally, snake venom phospholipase A2 (PLA2) that inhibits neuromuscular transmission by blocking acetylcholine release from the nerve termini. Is directly toxic to skeletal muscle upon local application in vivo (dystrophic effect). Also has direct nephrotoxicity in experimental mice; a single subcutaneous dose (1.38 ug/kg) produces renal tubular and glomerular damage within 24 hours. PLA2 catalyzes the calcium-dependent hydrolysis of the 2-acyl groups in 3-sn-phosphoglycerides. The chain is Basic phospholipase A2 notexin from Notechis scutatus scutatus (Mainland tiger snake).